Consider the following 345-residue polypeptide: Arginase (345 aa).

A compositionally biased stretch (basic and acidic residues) spans 1–16 (MKETAAAKFERQHMDS). Positions 1–34 (MKETAAAKFERQHMDSPDLGTDDDDKMSPATSPF) are disordered. Residues I101, H124, S126, G128, I232, and C234 each coordinate Mn(2+).

The protein belongs to the arginase family. In terms of assembly, homotrimer. Requires Mn(2+) as cofactor.

It carries out the reaction L-arginine + H2O = urea + L-ornithine. Its pathway is nitrogen metabolism; urea cycle; L-ornithine and urea from L-arginine: step 1/1. The enzyme activity is increased in the range of 20-50% upon the addition of Mn(2+) (1 mM), Co(2+) (1 mM), Ni(2+) (1 and 5 mM) and K(+) (5 mM). In contrast, the addition of Cu(2+), Zn(2+), Ca(2+), Mg(2+), Fe(2+) (both 1 and 5 mM), and Co(2+) (5 mM) strongly suppresses the arginase activity. SDS (1%) and EDTA (1 mM) are the most potent inhibitors. Reducing agents DTT (1 mM), PMSF (1 mM) and beta-mercaptoethanol (1 mM) also significantly inhibit activity by 85%, 64% and 35%, respectively. Surfactants Triton X-100 (1%), Tween-80 (1%) and Tween-20 (1%) are more tolerant, showing a slight decrease of arginase activity in the range of 10-30%. Its function is as follows. Cold-active L-arginase that catalyzes the hydrolysis of L-arginine to L-ornithine and urea, an essential reaction in the urea cycle for toxic ammonia removal and cell proliferation. Is not able to use D-arginine or L-canavanine as substrates. The chain is Arginase from Glaciozyma antarctica (strain PI12) (Antarctic psychrophilic yeast).